Reading from the N-terminus, the 310-residue chain is p-hydroxybenzoic acid efflux pump subunit AaeA (310 aa).

Residues 12-32 (AITVVLVILAFIAIFNAWVYY) form a helical membrane-spanning segment.

Belongs to the membrane fusion protein (MFP) (TC 8.A.1) family.

The protein resides in the cell inner membrane. Its function is as follows. Forms an efflux pump with AaeB. This Shigella flexneri protein is p-hydroxybenzoic acid efflux pump subunit AaeA.